Here is a 138-residue protein sequence, read N- to C-terminus: MVVADANSGRAVYWGTGRRKNAVARVRLVPGTGQLTVNGKDGNLYFQFNPNYLGVIKAPLETLGLENEYDILVKAEGGGLTGQADSVRLGVARALCQLDPDNRPPLKTEGYLTRDPRAKERKKYGLHKARKAPQYSKR.

The segment at 99 to 138 (DPDNRPPLKTEGYLTRDPRAKERKKYGLHKARKAPQYSKR) is disordered. A compositionally biased stretch (basic and acidic residues) spans 100–118 (PDNRPPLKTEGYLTRDPRA). A compositionally biased stretch (basic residues) spans 119–138 (KERKKYGLHKARKAPQYSKR).

Belongs to the universal ribosomal protein uS9 family.

The protein is Small ribosomal subunit protein uS9 of Nostoc punctiforme (strain ATCC 29133 / PCC 73102).